A 285-amino-acid polypeptide reads, in one-letter code: Transcription factor MYB15 (285 aa).

2 HTH myb-type domains span residues 9–61 and 62–116; these read KMGL…MNYL and KPDI…KKRL. 2 DNA-binding regions (H-T-H motif) span residues 37–61 and 89–112; these read WRALPKQAGLLRCGKSCRLRWMNYL and WSAIAAKLPGRTDNEIKNVWHTHL. The interval 115-172 is disordered; sequence RLEDYQPAKPKTSNKKKGTKPKSESVITSSNSTRSESELADSSNPSGESLFSTSPSTS. The span at 139 to 158 shows a compositional bias: polar residues; sequence SVITSSNSTRSESELADSSN. Residues 159-172 are compositionally biased toward low complexity; it reads PSGESLFSTSPSTS.

Interacts with SCRM/ICE1. Expressed in roots, leaves, stems and flowers. Expressed in stomatal guard cells.

It is found in the nucleus. Functionally, transcription factor involved in cold-regulation of CBF genes and in the development of freezing tolerance. May be part of a complex network of transcription factors controlling the expression of CBF genes and other genes in response to cold stress. Binds to the MYB recognition sequences in the promoters of CBF1, CBF2 and CBF3 genes. Involved in drought and salt tolerance. May enhance expression levels of genes involved in abscisic acid (ABA) biosynthesis and signaling, as well as those encoding stress-protective proteins. The polypeptide is Transcription factor MYB15 (Arabidopsis thaliana (Mouse-ear cress)).